The primary structure comprises 504 residues: 2,3-bisphosphoglycerate-independent phosphoglycerate mutase (504 aa).

Positions 11 and 61 each coordinate Mn(2+). Catalysis depends on Ser-61, which acts as the Phosphoserine intermediate. Substrate is bound by residues His-122, 152-153 (RD), Arg-183, Arg-189, 255-258 (RNDR), and Lys-329. Mn(2+) is bound by residues Asp-396, His-400, Asp-437, His-438, and His-455.

It belongs to the BPG-independent phosphoglycerate mutase family. As to quaternary structure, monomer. It depends on Mn(2+) as a cofactor.

The catalysed reaction is (2R)-2-phosphoglycerate = (2R)-3-phosphoglycerate. The protein operates within carbohydrate degradation; glycolysis; pyruvate from D-glyceraldehyde 3-phosphate: step 3/5. Its function is as follows. Catalyzes the interconversion of 2-phosphoglycerate and 3-phosphoglycerate. In Bacteroides fragilis (strain ATCC 25285 / DSM 2151 / CCUG 4856 / JCM 11019 / LMG 10263 / NCTC 9343 / Onslow / VPI 2553 / EN-2), this protein is 2,3-bisphosphoglycerate-independent phosphoglycerate mutase.